A 279-amino-acid polypeptide reads, in one-letter code: Phosphatidylglycerol--prolipoprotein diacylglyceryl transferase (279 aa).

The next 3 helical transmembrane spans lie at 18 to 38 (LSVR…YFVA), 55 to 75 (IIFY…VIFQ), and 89 to 109 (IWHG…AGVI). An a 1,2-diacyl-sn-glycero-3-phospho-(1'-sn-glycerol)-binding site is contributed by arginine 137. A run of 2 helical transmembrane segments spans residues 203 to 223 (LGET…FIEG) and 235 to 255 (IRVA…LIVY).

This sequence belongs to the Lgt family.

The protein resides in the cell membrane. It carries out the reaction L-cysteinyl-[prolipoprotein] + a 1,2-diacyl-sn-glycero-3-phospho-(1'-sn-glycerol) = an S-1,2-diacyl-sn-glyceryl-L-cysteinyl-[prolipoprotein] + sn-glycerol 1-phosphate + H(+). Its pathway is protein modification; lipoprotein biosynthesis (diacylglyceryl transfer). Functionally, catalyzes the transfer of the diacylglyceryl group from phosphatidylglycerol to the sulfhydryl group of the N-terminal cysteine of a prolipoprotein, the first step in the formation of mature lipoproteins. The sequence is that of Phosphatidylglycerol--prolipoprotein diacylglyceryl transferase from Staphylococcus aureus (strain USA300).